The chain runs to 521 residues: uncharacterized protein (521 aa).

The next 10 helical transmembrane spans lie at 103-123 (NLML…VPMP), 136-156 (FWFF…LWIT), 177-197 (YILF…FTAW), 200-220 (ITFT…GISF), 259-279 (AYAH…VYIV), 299-319 (IMYV…SSWI), 327-346 (YALV…VYVR), 358-378 (FVLV…LITM), 411-431 (CVAS…LHFG), and 450-470 (FKLT…ASYL).

It is found in the membrane. This is an uncharacterized protein from Schizosaccharomyces pombe (strain 972 / ATCC 24843) (Fission yeast).